Here is a 318-residue protein sequence, read N- to C-terminus: DNA-directed RNA polymerase subunit alpha 2 (318 aa).

The alpha N-terminal domain (alpha-NTD) stretch occupies residues 1 to 227; sequence MALENLLHPT…NQLRNIVDIE (227 aa). The segment at 242–318 is alpha C-terminal domain (alpha-CTD); sequence INPILLKHVE…TLIENWPQDL (77 aa).

It belongs to the RNA polymerase alpha chain family. As to quaternary structure, homodimer. The RNAP catalytic core consists of 2 alpha, 1 beta, 1 beta' and 1 omega subunit. When a sigma factor is associated with the core the holoenzyme is formed, which can initiate transcription.

It catalyses the reaction RNA(n) + a ribonucleoside 5'-triphosphate = RNA(n+1) + diphosphate. DNA-dependent RNA polymerase catalyzes the transcription of DNA into RNA using the four ribonucleoside triphosphates as substrates. The sequence is that of DNA-directed RNA polymerase subunit alpha 2 from Francisella tularensis subsp. novicida (strain U112).